The primary structure comprises 271 residues: Thermoregulatory protein LcrF (271 aa).

One can recognise an HTH araC/xylS-type domain in the interval 167-265 (ERLQKFMEEN…GCTPSQARLT (99 aa)). DNA-binding regions (H-T-H motif) lie at residues 184-205 (SKFA…GTVY) and 232-255 (IVDI…RRRF).

In terms of biological role, transcriptional activator of the thermally regulated virulent yopE gene. LcrF activity could be modulated by the interaction with an inducer molecule serving as a temperature messenger. The availability of the messenger would in turn be controlled by a temperature-responsive process serving as a cellular thermometer. The polypeptide is Thermoregulatory protein LcrF (lcrF) (Yersinia pestis).